Here is a 357-residue protein sequence, read N- to C-terminus: Queuosine-tRNA galactosyltransferase (357 aa).

The protein belongs to the glycosyltransferase 2 family.

It localises to the cytoplasm. The catalysed reaction is queuosine(34) in tRNA(Tyr) + UDP-alpha-D-galactose = O-5''-beta-D-galactosylqueuosine(34) in tRNA(Tyr) + UDP + H(+). In terms of biological role, glycosyltransferase that specifically catalyzes galactosylation of cytoplasmic tRNA(Tyr) modified with queuosine at position 34 (queuosine(34)). Galactosylates the cyclopentene hydroxyl group of queuosine(34) in tRNA(Tyr) to form galactosyl-queuosine(34). Mannosylation of queuosine(34) in tRNA(Tyr) is required to slow-down elongation at cognate codons UAC and suppress stop codon readthrough, thereby regulating protein translation. In Mus musculus (Mouse), this protein is Queuosine-tRNA galactosyltransferase.